The sequence spans 336 residues: MSIIVERLLSRESAYGDAVEDFPLRPQTLRQYIGQNKAKHNLEVFIEAAKMREETLDHVLLYGPPGLGKTTLANIIANEMGVNVKTTSGPAIGRPGDLAAVLTALQPGDVLFIDEIHRLHRSIEEVLYPAMEDFCLDIVIGKGPSARSVRLDLPPFTLVGATTRAGALSAPLRDRFGVLSRVEYYTVDQLSAIVERTAEVFEVEIDSLAALEIARRARGTPRIANRLLRRVRDFAQVRGNGTVTMEITQMALELLQVDKLGLDHIDHKLLLGIIEKFRGGPVGLETVSAPIGEESHTIEDVYEPYLLQIGFLQRTPRGRIVTPLAYEHFGMEIPKV.

The tract at residues 1-185 (MSIIVERLLS…FGVLSRVEYY (185 aa)) is large ATPase domain (RuvB-L). ATP-binding positions include L24, R25, G66, K69, T70, T71, 132-134 (EDF), R175, Y185, and R222. Position 70 (T70) interacts with Mg(2+). Residues 186 to 256 (TVDQLSAIVE…ITQMALELLQ (71 aa)) form a small ATPAse domain (RuvB-S) region. Residues 259–336 (KLGLDHIDHK…EHFGMEIPKV (78 aa)) are head domain (RuvB-H). Residues R314 and R319 each contribute to the DNA site.

The protein belongs to the RuvB family. Homohexamer. Forms an RuvA(8)-RuvB(12)-Holliday junction (HJ) complex. HJ DNA is sandwiched between 2 RuvA tetramers; dsDNA enters through RuvA and exits via RuvB. An RuvB hexamer assembles on each DNA strand where it exits the tetramer. Each RuvB hexamer is contacted by two RuvA subunits (via domain III) on 2 adjacent RuvB subunits; this complex drives branch migration. In the full resolvosome a probable DNA-RuvA(4)-RuvB(12)-RuvC(2) complex forms which resolves the HJ.

It localises to the cytoplasm. The enzyme catalyses ATP + H2O = ADP + phosphate + H(+). Its function is as follows. The RuvA-RuvB-RuvC complex processes Holliday junction (HJ) DNA during genetic recombination and DNA repair, while the RuvA-RuvB complex plays an important role in the rescue of blocked DNA replication forks via replication fork reversal (RFR). RuvA specifically binds to HJ cruciform DNA, conferring on it an open structure. The RuvB hexamer acts as an ATP-dependent pump, pulling dsDNA into and through the RuvAB complex. RuvB forms 2 homohexamers on either side of HJ DNA bound by 1 or 2 RuvA tetramers; 4 subunits per hexamer contact DNA at a time. Coordinated motions by a converter formed by DNA-disengaged RuvB subunits stimulates ATP hydrolysis and nucleotide exchange. Immobilization of the converter enables RuvB to convert the ATP-contained energy into a lever motion, pulling 2 nucleotides of DNA out of the RuvA tetramer per ATP hydrolyzed, thus driving DNA branch migration. The RuvB motors rotate together with the DNA substrate, which together with the progressing nucleotide cycle form the mechanistic basis for DNA recombination by continuous HJ branch migration. Branch migration allows RuvC to scan DNA until it finds its consensus sequence, where it cleaves and resolves cruciform DNA. The chain is Holliday junction branch migration complex subunit RuvB from Bacillus cereus (strain ATCC 14579 / DSM 31 / CCUG 7414 / JCM 2152 / NBRC 15305 / NCIMB 9373 / NCTC 2599 / NRRL B-3711).